Reading from the N-terminus, the 485-residue chain is Cys-Gly metallodipeptidase DUG1 (485 aa).

Residue H109 participates in Zn(2+) binding. D111 is a catalytic residue. Zn(2+) is bound at residue D144. E178 acts as the Proton acceptor in catalysis. Residues E179, D207, and H457 each contribute to the Zn(2+) site.

It belongs to the peptidase M20A family. Homodimer. Component of the GSH degradosomal complex. The cofactor is Zn(2+). Mn(2+) is required as a cofactor.

The protein localises to the cytoplasm. Its function is as follows. Catalytic component of the GSH degradosomal complex involved in the degradation of glutathione (GSH) and other peptides containing a gamma-glu-X bond. Also functions as a dipeptidase with high specificity for Cys-Gly and no activity toward tri- or tetrapeptides. This Candida albicans (strain SC5314 / ATCC MYA-2876) (Yeast) protein is Cys-Gly metallodipeptidase DUG1 (DUG1).